The sequence spans 265 residues: MGQKIHPTGFRLAVSRNWASRWYASNTKFAGMLKEDIEVRDFLKKKLKNASVGRVVIERPARNARITIYSSRPGVVIGKKGEDIELLKAELQRRMGVPVHVNIEEIRKPETDAQLIADSITQQLERRIMFRRAMKRAMQNAMRLGAQGIKIMSAGRLNGIEIARTEWYREGRVPLHTLRADIDYGFSEAETTYGIIGVKVWVYKGDHLGRNDAPVVEEPQDDRRRRPGRPEGRRREGEGRPGGNRRGGAGAGRRAAPGADAKSGE.

A KH type-2 domain is found at 39–107; that stretch reads VRDFLKKKLK…PVHVNIEEIR (69 aa). The disordered stretch occupies residues 211-265; sequence NDAPVVEEPQDDRRRRPGRPEGRRREGEGRPGGNRRGGAGAGRRAAPGADAKSGE. Positions 221-239 are enriched in basic and acidic residues; the sequence is DDRRRRPGRPEGRRREGEG. A compositionally biased stretch (gly residues) spans 240-251; the sequence is RPGGNRRGGAGA.

The protein belongs to the universal ribosomal protein uS3 family. In terms of assembly, part of the 30S ribosomal subunit. Forms a tight complex with proteins S10 and S14.

Its function is as follows. Binds the lower part of the 30S subunit head. Binds mRNA in the 70S ribosome, positioning it for translation. This is Small ribosomal subunit protein uS3 from Cupriavidus necator (strain ATCC 17699 / DSM 428 / KCTC 22496 / NCIMB 10442 / H16 / Stanier 337) (Ralstonia eutropha).